The sequence spans 139 residues: ATP synthase epsilon chain (139 aa).

The protein belongs to the ATPase epsilon chain family. F-type ATPases have 2 components, CF(1) - the catalytic core - and CF(0) - the membrane proton channel. CF(1) has five subunits: alpha(3), beta(3), gamma(1), delta(1), epsilon(1). CF(0) has three main subunits: a, b and c.

Its subcellular location is the cell inner membrane. Its function is as follows. Produces ATP from ADP in the presence of a proton gradient across the membrane. The polypeptide is ATP synthase epsilon chain (Salmonella typhimurium (strain LT2 / SGSC1412 / ATCC 700720)).